Reading from the N-terminus, the 343-residue chain is Dihydroorotate dehydrogenase (quinone) (343 aa).

FMN contacts are provided by residues Ala61–Lys65 and Thr85. Lys65 contacts substrate. Asn110–Phe114 provides a ligand contact to substrate. The FMN site is built by Asn138 and Asn171. Asn171 is a substrate binding site. Catalysis depends on Ser174, which acts as the Nucleophile. Position 176 (Asn176) interacts with substrate. FMN contacts are provided by Lys216 and Thr244. Substrate is bound at residue Asn245–Thr246. Residues Gly267, Gly296, and Tyr317–Ser318 contribute to the FMN site.

The protein belongs to the dihydroorotate dehydrogenase family. Type 2 subfamily. As to quaternary structure, monomer. FMN serves as cofactor.

It is found in the cell membrane. It carries out the reaction (S)-dihydroorotate + a quinone = orotate + a quinol. The protein operates within pyrimidine metabolism; UMP biosynthesis via de novo pathway; orotate from (S)-dihydroorotate (quinone route): step 1/1. Its function is as follows. Catalyzes the conversion of dihydroorotate to orotate with quinone as electron acceptor. The sequence is that of Dihydroorotate dehydrogenase (quinone) from Stutzerimonas stutzeri (strain A1501) (Pseudomonas stutzeri).